Here is a 248-residue protein sequence, read N- to C-terminus: Triosephosphate isomerase (248 aa).

The substrate site is built by asparagine 10 and lysine 12. Histidine 95 (electrophile) is an active-site residue. The active-site Proton acceptor is glutamate 165.

It belongs to the triosephosphate isomerase family. Homodimer.

Its subcellular location is the cytoplasm. The enzyme catalyses D-glyceraldehyde 3-phosphate = dihydroxyacetone phosphate. Its pathway is carbohydrate biosynthesis; gluconeogenesis. It functions in the pathway carbohydrate degradation; glycolysis; D-glyceraldehyde 3-phosphate from glycerone phosphate: step 1/1. This is Triosephosphate isomerase (TPI1) from Candida albicans (strain SC5314 / ATCC MYA-2876) (Yeast).